A 692-amino-acid polypeptide reads, in one-letter code: Elongation factor G (692 aa).

A tr-type G domain is found at Ala-8–Leu-282. GTP contacts are provided by residues Ala-17–Thr-24, Asp-81–His-85, and Asn-135–Asp-138.

This sequence belongs to the TRAFAC class translation factor GTPase superfamily. Classic translation factor GTPase family. EF-G/EF-2 subfamily.

It is found in the cytoplasm. Catalyzes the GTP-dependent ribosomal translocation step during translation elongation. During this step, the ribosome changes from the pre-translocational (PRE) to the post-translocational (POST) state as the newly formed A-site-bound peptidyl-tRNA and P-site-bound deacylated tRNA move to the P and E sites, respectively. Catalyzes the coordinated movement of the two tRNA molecules, the mRNA and conformational changes in the ribosome. The chain is Elongation factor G from Streptococcus uberis (strain ATCC BAA-854 / 0140J).